The following is a 225-amino-acid chain: Potassium-transporting ATPase KdpC subunit (225 aa).

Residues 18–38 traverse the membrane as a helical segment; that stretch reads ALLVLTVVTGIVYPLVVTGVA. The segment at 134-161 is disordered; sequence NSVPGHPVRPEDVPADAVTSSGSGLDPD.

Belongs to the KdpC family. In terms of assembly, the system is composed of three essential subunits: KdpA, KdpB and KdpC.

The protein resides in the cell membrane. Functionally, part of the high-affinity ATP-driven potassium transport (or Kdp) system, which catalyzes the hydrolysis of ATP coupled with the electrogenic transport of potassium into the cytoplasm. This subunit acts as a catalytic chaperone that increases the ATP-binding affinity of the ATP-hydrolyzing subunit KdpB by the formation of a transient KdpB/KdpC/ATP ternary complex. The chain is Potassium-transporting ATPase KdpC subunit from Streptomyces coelicolor (strain ATCC BAA-471 / A3(2) / M145).